Consider the following 157-residue polypeptide: Endoribonuclease YbeY (157 aa).

Residues H111, H115, and H121 each coordinate Zn(2+).

Belongs to the endoribonuclease YbeY family. Zn(2+) is required as a cofactor.

It is found in the cytoplasm. Single strand-specific metallo-endoribonuclease involved in late-stage 70S ribosome quality control and in maturation of the 3' terminus of the 16S rRNA. This chain is Endoribonuclease YbeY, found in Pseudomonas putida (strain W619).